A 449-amino-acid polypeptide reads, in one-letter code: Xylose isomerase (449 aa).

Residues His-101 and Asp-104 contribute to the active site. Mg(2+) contacts are provided by Glu-232, Glu-268, His-271, Asp-296, Asp-307, Asp-309, and Asp-340.

The protein belongs to the xylose isomerase family. In terms of assembly, homotetramer. The cofactor is Mg(2+).

It is found in the cytoplasm. The catalysed reaction is alpha-D-xylose = alpha-D-xylulofuranose. This is Xylose isomerase from Bifidobacterium longum (strain DJO10A).